Here is a 497-residue protein sequence, read N- to C-terminus: uncharacterized protein (497 aa).

Basic and acidic residues predominate over residues 44 to 74 (IRQEKEMKRHDDDGRQYQSDRKFAKSKHDDI). Disordered regions lie at residues 44-95 (IRQE…SVGR), 120-151 (VSRS…EHRD), and 195-227 (GNVI…TSAR). A compositionally biased stretch (low complexity) spans 120-131 (VSRSSSIGHSGS). A phosphoserine mark is found at Ser-123, Ser-125, and Ser-131. A Phosphothreonine modification is found at Thr-132. Positions 213-227 (ASLSRAASNSSTSAR) are enriched in low complexity. Thr-258 is modified (phosphothreonine). Ser-310 bears the Phosphoserine mark. A compositionally biased stretch (polar residues) spans 367-385 (NVNPSNQDLASVKQPSGFS). Residues 367–497 (NVNPSNQDLA…GFPDTSRPPH (131 aa)) are disordered. The span at 400-409 (NFSNDDSSFF) shows a compositional bias: low complexity. At Ser-436 the chain carries Phosphoserine. A compositionally biased stretch (low complexity) spans 448-472 (GLSSGASIPSAPPGFGYQQPSFPYS).

The protein localises to the cytoplasm. The protein resides in the nucleus. This is an uncharacterized protein from Schizosaccharomyces pombe (strain 972 / ATCC 24843) (Fission yeast).